Reading from the N-terminus, the 309-residue chain is uncharacterized protein (309 aa).

The protein to S.pombe SpAC14C4.04.

This is an uncharacterized protein from Schizosaccharomyces pombe (strain 972 / ATCC 24843) (Fission yeast).